Reading from the N-terminus, the 99-residue chain is Ferredoxin, vegetative (99 aa).

The 2Fe-2S ferredoxin-type domain occupies 4–96 (YQVRLINKKR…DCTIRTHQEP (93 aa)). [2Fe-2S] cluster contacts are provided by C42, C47, C50, and C80.

Belongs to the 2Fe2S plant-type ferredoxin family. [2Fe-2S] cluster is required as a cofactor.

In terms of biological role, ferredoxins are iron-sulfur proteins that transfer electrons in a wide variety of metabolic reactions. Donates electrons to the nitrogenase 2. The polypeptide is Ferredoxin, vegetative (fdxH2) (Trichormus variabilis (strain ATCC 29413 / PCC 7937) (Anabaena variabilis)).